A 421-amino-acid polypeptide reads, in one-letter code: Ribulose bisphosphate carboxylase large chain (421 aa).

Substrate contacts are provided by Asn-68 and Thr-118. Catalysis depends on Lys-120, which acts as the Proton acceptor. Lys-122 is a substrate binding site. The Mg(2+) site is built by Lys-146, Asp-148, and Glu-149. The residue at position 146 (Lys-146) is an N6-carboxylysine. Catalysis depends on His-239, which acts as the Proton acceptor. Residues Arg-240, His-272, and Ser-324 each coordinate substrate.

This sequence belongs to the RuBisCO large chain family. Type I subfamily. In terms of assembly, heterohexadecamer of 8 large chains and 8 small chains; disulfide-linked. The disulfide link is formed within the large subunit homodimers. The cofactor is Mg(2+). Post-translationally, the disulfide bond which can form in the large chain dimeric partners within the hexadecamer appears to be associated with oxidative stress and protein turnover.

It localises to the plastid. The protein localises to the chloroplast. The enzyme catalyses 2 (2R)-3-phosphoglycerate + 2 H(+) = D-ribulose 1,5-bisphosphate + CO2 + H2O. It catalyses the reaction D-ribulose 1,5-bisphosphate + O2 = 2-phosphoglycolate + (2R)-3-phosphoglycerate + 2 H(+). Its function is as follows. RuBisCO catalyzes two reactions: the carboxylation of D-ribulose 1,5-bisphosphate, the primary event in carbon dioxide fixation, as well as the oxidative fragmentation of the pentose substrate in the photorespiration process. Both reactions occur simultaneously and in competition at the same active site. The polypeptide is Ribulose bisphosphate carboxylase large chain (rbcL) (Aegilops tauschii (Tausch's goatgrass)).